Consider the following 158-residue polypeptide: Globin CTT-I/CTT-IA (158 aa).

A signal peptide spans 1 to 15 (MKFLILALCVAAAMA). The region spanning 16-158 (GPSGDQIAAA…FVFSTLKNEL (143 aa)) is the Globin domain. Heme b is bound by residues His-74 and His-109.

The protein belongs to the globin family. As to quaternary structure, monomer.

The polypeptide is Globin CTT-I/CTT-IA (CTT-1) (Chironomus thummi thummi (Midge)).